The primary structure comprises 329 residues: DNA-directed RNA polymerase subunit alpha (329 aa).

Residues 1–234 are alpha N-terminal domain (alpha-NTD); sequence MQGSVTEFLK…EQLDAFVELR (234 aa). Residues 248-329 are alpha C-terminal domain (alpha-CTD); sequence FDPILLRPVD…WPPASLADDL (82 aa).

Belongs to the RNA polymerase alpha chain family. Homodimer. The RNAP catalytic core consists of 2 alpha, 1 beta, 1 beta' and 1 omega subunit. When a sigma factor is associated with the core the holoenzyme is formed, which can initiate transcription.

It carries out the reaction RNA(n) + a ribonucleoside 5'-triphosphate = RNA(n+1) + diphosphate. Its function is as follows. DNA-dependent RNA polymerase catalyzes the transcription of DNA into RNA using the four ribonucleoside triphosphates as substrates. The sequence is that of DNA-directed RNA polymerase subunit alpha from Shewanella baltica (strain OS155 / ATCC BAA-1091).